A 641-amino-acid polypeptide reads, in one-letter code: UvrABC system protein C (641 aa).

Residues 16–95 (ESPGVYRFWD…IKQYEPRFNI (80 aa)) form the GIY-YIG domain. The UVR domain maps to 208 to 243 (TEYLRRLEKDMRAAAAAEDFERAARLRDDAAALRLA).

It belongs to the UvrC family. As to quaternary structure, interacts with UvrB in an incision complex.

It localises to the cytoplasm. The UvrABC repair system catalyzes the recognition and processing of DNA lesions. UvrC both incises the 5' and 3' sides of the lesion. The N-terminal half is responsible for the 3' incision and the C-terminal half is responsible for the 5' incision. This is UvrABC system protein C from Acidothermus cellulolyticus (strain ATCC 43068 / DSM 8971 / 11B).